The sequence spans 749 residues: Subtilisin-like protease SBT4.14 (749 aa).

Residues 1-28 form the signal peptide; the sequence is MIRSKCSCHHHLLVLVMVVLWISPRYAS. A propeptide spans 29 to 115 (activation peptide); the sequence is AEDEHAKDFY…VSRNQYRKLH (87 aa). The Inhibitor I9 domain maps to 38–115; sequence YIIYLGDRPD…VSRNQYRKLH (78 aa). Residues 119-595 enclose the Peptidase S8 domain; sequence SWDFVGLPLT…GGQINPRRAA (477 aa). The active-site Charge relay system is D145. N176 is a glycosylation site (N-linked (GlcNAc...) asparagine). The active-site Charge relay system is the H210. N-linked (GlcNAc...) asparagine glycosylation is found at N225, N233, N446, and N458. Catalysis depends on S536, which acts as the Charge relay system. Residue N618 is glycosylated (N-linked (GlcNAc...) asparagine).

It belongs to the peptidase S8 family. In terms of processing, the C-terminal propeptide is autocleaved. In terms of tissue distribution, expressed only in roots, particularly in xylem.

This Arabidopsis thaliana (Mouse-ear cress) protein is Subtilisin-like protease SBT4.14.